Consider the following 388-residue polypeptide: tRNA (guanine(26)-N(2))-dimethyltransferase (388 aa).

The Trm1 methyltransferase domain occupies 7–381; the sequence is KTVEEGLTKI…APLKKIKEII (375 aa). Residues arginine 40, arginine 70, aspartate 88, aspartate 115, and alanine 116 each contribute to the S-adenosyl-L-methionine site. Positions 248, 251, 268, and 271 each coordinate Zn(2+).

This sequence belongs to the class I-like SAM-binding methyltransferase superfamily. Trm1 family.

The catalysed reaction is guanosine(26) in tRNA + 2 S-adenosyl-L-methionine = N(2)-dimethylguanosine(26) in tRNA + 2 S-adenosyl-L-homocysteine + 2 H(+). Dimethylates a single guanine residue at position 26 of a number of tRNAs using S-adenosyl-L-methionine as donor of the methyl groups. This is tRNA (guanine(26)-N(2))-dimethyltransferase from Methanobrevibacter smithii (strain ATCC 35061 / DSM 861 / OCM 144 / PS).